Reading from the N-terminus, the 90-residue chain is DNA-directed RNA polymerase subunit omega (90 aa).

Belongs to the RNA polymerase subunit omega family. In terms of assembly, the RNAP catalytic core consists of 2 alpha, 1 beta, 1 beta' and 1 omega subunit. When a sigma factor is associated with the core the holoenzyme is formed, which can initiate transcription.

It carries out the reaction RNA(n) + a ribonucleoside 5'-triphosphate = RNA(n+1) + diphosphate. Functionally, promotes RNA polymerase assembly. Latches the N- and C-terminal regions of the beta' subunit thereby facilitating its interaction with the beta and alpha subunits. The sequence is that of DNA-directed RNA polymerase subunit omega from Hamiltonella defensa subsp. Acyrthosiphon pisum (strain 5AT).